Consider the following 377-residue polypeptide: Probable purine permease 22 (377 aa).

A run of 10 helical transmembrane segments spans residues 39-59, 71-91, 107-127, 128-148, 166-186, 202-222, 238-258, 283-303, 309-329, and 338-358; these read WLRVSIYAIFVIFCQPLATVL, TYVVTLLQLIGFPVLILFRFF, SPSFTTLASVYLCTGLLVSAY, AYLSAVGLLYLPVSTFSLILA, FTPLIVNSLFLLTVSSALLVV, VIGFICTIGASAGIGLVLSLI, VLDLANYQSLVATCVVLIGLF, TLASAAIFWQVYTVGCVGLIF, FSNSITAVGLPIVPVVAVIVF, and IFSIILAIWGFLSFVYQHYLD.

The protein belongs to the purine permeases (TC 2.A.7.14) family.

It is found in the membrane. This chain is Probable purine permease 22 (PUP22), found in Arabidopsis thaliana (Mouse-ear cress).